The primary structure comprises 175 residues: Protein ppBat (175 aa).

Residues Cys74 and Cys111 each contribute to the Zn(2+) site. The riboflavin site is built by Asn161 and Trp164.

As to quaternary structure, homodimer.

In terms of biological role, binds flavin derivatives, such as lumichrome, riboflavin, FMN, and FAD. May act as a flavin storage protein. Appears to lack proteolytic or chaperone activities. The polypeptide is Protein ppBat (Bacteroides thetaiotaomicron (strain ATCC 29148 / DSM 2079 / JCM 5827 / CCUG 10774 / NCTC 10582 / VPI-5482 / E50)).